A 100-amino-acid polypeptide reads, in one-letter code: Replication restart protein PriB (100 aa).

The 96-residue stretch at 4–99 (TNLVSLAALI…LRIQNIKEYK (96 aa)) folds into the SSB domain.

This sequence belongs to the PriB family. As to quaternary structure, homodimer. Component of the replication restart primosome. Primosome assembly occurs via a 'hand-off' mechanism. PriA binds to replication forks, subsequently PriB then DnaT bind; DnaT then displaces ssDNA to generate the helicase loading substrate. Interacts with PriA with high affinity, independent of DNA presence.

Its activity is regulated as follows. PriA:PriB complex-catalyzed duplex DNA winding is inhibited by CGS 15943 (CHEBI:131351); PriA is the drug target. Stimulates the DNA unwinding activity of PriA helicase, which does not seem to require single-stranded (ss)DNA-binding by PriB. Activates DNA-dependent ATP hydrolysis catalyzed by PriA. Weakly binds ssDNA. Weakly binds double-stranded (ds)DNA, a partial duplex DNA with a 3' ssDNA overhang, and a forked DNA structure with fully duplex leading and lagging strand arms in vitro. Its function is as follows. Involved in the restart of stalled replication forks, which reloads the replicative helicase on sites other than the origin of replication; the PriA-PriB pathway is the major replication restart pathway. During primosome assembly it facilitates complex formation between PriA and DnaT on DNA; stabilizes PriA on DNA. Stimulates the DNA unwinding activity of PriA helicase. The chain is Replication restart protein PriB from Neisseria gonorrhoeae (strain ATCC 700825 / FA 1090).